Reading from the N-terminus, the 564-residue chain is Phosphomethylpyrimidine synthase (564 aa).

Substrate is bound by residues asparagine 203, methionine 232, tyrosine 261, histidine 297, 317–319, 358–361, and glutamate 397; these read SRG and DGLR. Residue histidine 401 participates in Zn(2+) binding. Tyrosine 424 contacts substrate. Histidine 465 contacts Zn(2+). Residues cysteine 541, cysteine 544, and cysteine 549 each coordinate [4Fe-4S] cluster.

It belongs to the ThiC family. [4Fe-4S] cluster is required as a cofactor.

It carries out the reaction 5-amino-1-(5-phospho-beta-D-ribosyl)imidazole + S-adenosyl-L-methionine = 4-amino-2-methyl-5-(phosphooxymethyl)pyrimidine + CO + 5'-deoxyadenosine + formate + L-methionine + 3 H(+). It participates in cofactor biosynthesis; thiamine diphosphate biosynthesis. Functionally, catalyzes the synthesis of the hydroxymethylpyrimidine phosphate (HMP-P) moiety of thiamine from aminoimidazole ribotide (AIR) in a radical S-adenosyl-L-methionine (SAM)-dependent reaction. The polypeptide is Phosphomethylpyrimidine synthase (Bacteroides fragilis (strain ATCC 25285 / DSM 2151 / CCUG 4856 / JCM 11019 / LMG 10263 / NCTC 9343 / Onslow / VPI 2553 / EN-2)).